The primary structure comprises 886 residues: Leucine--tRNA ligase (886 aa).

A 'HIGH' region motif is present at residues P51 to H61. The 'KMSKS' region signature appears at K644 to S648. K647 contributes to the ATP binding site.

It belongs to the class-I aminoacyl-tRNA synthetase family.

It is found in the cytoplasm. The catalysed reaction is tRNA(Leu) + L-leucine + ATP = L-leucyl-tRNA(Leu) + AMP + diphosphate. The protein is Leucine--tRNA ligase of Bartonella tribocorum (strain CIP 105476 / IBS 506).